The chain runs to 198 residues: Elongation factor Ts (198 aa).

The interval 81–84 (TDFV) is involved in Mg(2+) ion dislocation from EF-Tu.

This sequence belongs to the EF-Ts family.

The protein resides in the cytoplasm. In terms of biological role, associates with the EF-Tu.GDP complex and induces the exchange of GDP to GTP. It remains bound to the aminoacyl-tRNA.EF-Tu.GTP complex up to the GTP hydrolysis stage on the ribosome. The polypeptide is Elongation factor Ts (Dictyoglomus turgidum (strain DSM 6724 / Z-1310)).